A 211-amino-acid chain; its full sequence is Putative ankyrin repeat protein R810 (211 aa).

ANK repeat units follow at residues 31–61 (TKFI…NLKY), 72–101 (NIND…DICA), 103–131 (QNSP…KFFG), 133–162 (YSSA…FCLE), and 163–191 (MEIA…SYFD).

The chain is Putative ankyrin repeat protein R810 from Acanthamoeba polyphaga mimivirus (APMV).